A 626-amino-acid chain; its full sequence is Chaperone protein HtpG (626 aa).

An a; substrate-binding region spans residues 1-329 (MSEETLSFQA…SSDLPLNVSR (329 aa)). A b region spans residues 330-549 (EMLQDDPRLR…EGAMSLHLQK (220 aa)). The tract at residues 550-626 (LLRQANQGSE…LTEVMGKGLI (77 aa)) is c.

The protein belongs to the heat shock protein 90 family. In terms of assembly, homodimer.

It localises to the cytoplasm. Functionally, molecular chaperone. Has ATPase activity. The sequence is that of Chaperone protein HtpG from Rhodospirillum rubrum (strain ATCC 11170 / ATH 1.1.1 / DSM 467 / LMG 4362 / NCIMB 8255 / S1).